The primary structure comprises 55 residues: MAKAAMIKIKLLSTADTGYFYVTKKNARTKTEKLSFKKYDPVVRKHVEFKETKIK.

It belongs to the bacterial ribosomal protein bL33 family.

The polypeptide is Large ribosomal subunit protein bL33 (Beijerinckia indica subsp. indica (strain ATCC 9039 / DSM 1715 / NCIMB 8712)).